The primary structure comprises 156 residues: Small ribosomal subunit protein uS7 (156 aa).

Belongs to the universal ribosomal protein uS7 family. In terms of assembly, part of the 30S ribosomal subunit. Contacts proteins S9 and S11.

In terms of biological role, one of the primary rRNA binding proteins, it binds directly to 16S rRNA where it nucleates assembly of the head domain of the 30S subunit. Is located at the subunit interface close to the decoding center, probably blocks exit of the E-site tRNA. This chain is Small ribosomal subunit protein uS7, found in Mycobacterium avium (strain 104).